Consider the following 518-residue polypeptide: 2,3-bisphosphoglycerate-independent phosphoglycerate mutase (518 aa).

Mn(2+) is bound by residues D14 and S64. S64 (phosphoserine intermediate) is an active-site residue. Residues H125, 155–156, R187, R193, 264–267, and K337 each bind substrate; these read RD and RPDR. Mn(2+)-binding residues include D404, H408, D445, H446, and H467.

Belongs to the BPG-independent phosphoglycerate mutase family. Mn(2+) serves as cofactor.

The catalysed reaction is (2R)-2-phosphoglycerate = (2R)-3-phosphoglycerate. Its pathway is carbohydrate degradation; glycolysis; pyruvate from D-glyceraldehyde 3-phosphate: step 3/5. Functionally, catalyzes the interconversion of 2-phosphoglycerate and 3-phosphoglycerate. The sequence is that of 2,3-bisphosphoglycerate-independent phosphoglycerate mutase from Methanococcoides burtonii (strain DSM 6242 / NBRC 107633 / OCM 468 / ACE-M).